A 336-amino-acid chain; its full sequence is MSRVTLSRYLIEQTRSNNTPADLRFLIEVVARACKEISHHVSKGALGGVLGSMGTENVQGEVQKKLDVISNDILLEANEWGGHLAGMASEEMDNAYQIPGKYPKGAYLLVFDPLDGSSNIDVNVSVGTIFSVLRCPNQYLSQNESLNEEAFLQPGTEQVAAGYAIYGPQTMLILTLGNGVKGFTLDRELGSFVLTHENIQVPATTAEFAINMSNQRHWEAPVQRYVGELLAGETGPLKKNYNMRWIASMVADVHRILTRGGLFMYPRDAREPSKPGKLRLMYEANPMSFIIEQAGGASTNGYDRILDIKPESLHQRVSVILGSKEEVERVTAYHKE.

E90, D112, L114, and D115 together coordinate Mg(2+). Residues 115 to 118, N211, and K277 contribute to the substrate site; that span reads DGSS. E283 provides a ligand contact to Mg(2+).

Belongs to the FBPase class 1 family. In terms of assembly, homotetramer. It depends on Mg(2+) as a cofactor.

It is found in the cytoplasm. The enzyme catalyses beta-D-fructose 1,6-bisphosphate + H2O = beta-D-fructose 6-phosphate + phosphate. It functions in the pathway carbohydrate biosynthesis; gluconeogenesis. This chain is Fructose-1,6-bisphosphatase class 1, found in Pseudomonas putida (strain GB-1).